Consider the following 455-residue polypeptide: MSFVPGQENAGSRSSSVNRAGNGILKKTTWADQTERGPNNQNRGRRNQPKQTATTQPNSGSVVPHYSWFSGITQFQKGKEFQFAQGQGVPIANGIPASEQKGYWYRHNRRSFKTPDGQQKQLLPRWYFYYLGTGPHAGAEYGDDIDGVVWVASQQADTKTTADIVERDPSSHEAIPTRFAPGTVLPQGFYVEGSGRSAPASRSGSRSQSRGPNNRARSSSNQRQPASTVKPDMAEEIAALVLAKLGKDAGQPKQVTKQSAKEVRQKILNKPRQKRTPNKQCPVQQCFGKRGPNQNFGGSEMLKLGTSDPQFPILAELAPTPSAFFFGSKLELVKKNSGGADDPTKDVYELQYSGAIRFDSTLPGFETIMKVLNENLDAYQDQAGGADVVSPKPQRKRGTKQKALKGEVDNVSVAKPKSSVQRNVSRELTPEDRSLLAQILDDGVVPDGLEDDSNV.

The disordered stretch occupies residues 1 to 62 (MSFVPGQENA…ATTQPNSGSV (62 aa)). Polar residues-rich tracts occupy residues 9-19 (NAGSRSSSVNR) and 50-61 (KQTATTQPNSGS). The tract at residues 56–197 (QPNSGSVVPH…GFYVEGSGRS (142 aa)) is RNA-binding. The 130-residue stretch at 64–193 (PHYSWFSGIT…VLPQGFYVEG (130 aa)) folds into the CoV N NTD domain. Positions 109, 125, and 167 each coordinate RNA. Disordered stretches follow at residues 159–230 (KTTA…STVK), 271–292 (PRQK…KRGP), and 384–428 (GGAD…SREL). A Phosphoserine; by host modification is found at serine 170. Threonine 177 carries the post-translational modification Phosphothreonine; by host. The segment covering 193-212 (GSGRSAPASRSGSRSQSRGP) has biased composition (low complexity). Serine 194 carries the phosphoserine; by host modification. Residues 215 to 227 (RARSSSNQRQPAS) show a composition bias toward polar residues. The CoV N CTD domain occupies 260-383 (AKEVRQKILN…ENLDAYQDQA (124 aa)). Residues 267 to 384 (ILNKPRQKRT…NLDAYQDQAG (118 aa)) form a dimerization region. Serine 390 bears the Phosphoserine; by host mark. Positions 393–403 (PQRKRGTKQKA) are enriched in basic residues. Position 425 is a phosphoserine; by host (serine 425). Phosphothreonine; by host is present on threonine 429.

Belongs to the betacoronavirus nucleocapsid protein family. As to quaternary structure, homooligomer. Both monomeric and oligomeric forms interact with RNA. Interacts with protein M. Interacts with NSP3; this interaction serves to tether the genome to the newly translated replicase-transcriptase complex at a very early stage of infection. In terms of processing, ADP-ribosylated. The ADP-ribosylation is retained in the virion during infection. Phosphorylated on serine and threonine residues.

It is found in the virion. The protein localises to the host endoplasmic reticulum-Golgi intermediate compartment. It localises to the host Golgi apparatus. Functionally, packages the positive strand viral genome RNA into a helical ribonucleocapsid (RNP) and plays a fundamental role during virion assembly through its interactions with the viral genome and membrane protein M. Plays an important role in enhancing the efficiency of subgenomic viral RNA transcription as well as viral replication. The polypeptide is Nucleoprotein (Murine coronavirus (strain 1) (MHV-1)).